A 173-amino-acid polypeptide reads, in one-letter code: Protein SUGARY ENHANCER 1 (173 aa).

The disordered stretch occupies residues 1–31; the sequence is MIRPAPWVGAGHRGRGGEAGACTESLGSESG.

This sequence belongs to the fantastic four family.

In terms of biological role, involved in starch metabolism in endosperm. Acts as a modifier of SUGARY1 (SU1), an isoamylase starch-debranching enzyme involved in amylopectin biosynthesis in endosperm. This is Protein SUGARY ENHANCER 1 from Zea mays (Maize).